A 118-amino-acid chain; its full sequence is Large ribosomal subunit protein uL18 (118 aa).

Residues 1 to 26 (MISKPDKNKIRQKRHRRVRGKLSGTA) form a disordered region. Residues 10–20 (IRQKRHRRVRG) show a composition bias toward basic residues.

Belongs to the universal ribosomal protein uL18 family. As to quaternary structure, part of the 50S ribosomal subunit; part of the 5S rRNA/L5/L18/L25 subcomplex. Contacts the 5S and 23S rRNAs.

This is one of the proteins that bind and probably mediate the attachment of the 5S RNA into the large ribosomal subunit, where it forms part of the central protuberance. The polypeptide is Large ribosomal subunit protein uL18 (Streptococcus equi subsp. zooepidemicus (strain H70)).